The primary structure comprises 205 residues: Small ribosomal subunit protein uS5 (205 aa).

Positions 49–112 constitute an S5 DRBM domain; sequence LVDEVLCIDM…TNAKLNIVKV (64 aa).

It belongs to the universal ribosomal protein uS5 family. In terms of assembly, part of the 30S ribosomal subunit. Contacts protein S4.

With S4 and S12 plays an important role in translational accuracy. The protein is Small ribosomal subunit protein uS5 of Methanocorpusculum labreanum (strain ATCC 43576 / DSM 4855 / Z).